Here is a 405-residue protein sequence, read N- to C-terminus: Elongation factor Tu (405 aa).

The tr-type G domain maps to 10–215 (KPHVNVGTIG…AVDSYIPTPE (206 aa)). The G1 stretch occupies residues 19–26 (GHVDHGKT). 19 to 26 (GHVDHGKT) serves as a coordination point for GTP. Threonine 26 serves as a coordination point for Mg(2+). The interval 61-65 (GITIN) is G2. The G3 stretch occupies residues 82 to 85 (DCPG). Residues 82-86 (DCPGH) and 137-140 (NKVD) contribute to the GTP site. The segment at 137 to 140 (NKVD) is G4. A G5 region spans residues 175–177 (SAL).

Belongs to the TRAFAC class translation factor GTPase superfamily. Classic translation factor GTPase family. EF-Tu/EF-1A subfamily. As to quaternary structure, monomer.

It is found in the cytoplasm. It carries out the reaction GTP + H2O = GDP + phosphate + H(+). In terms of biological role, GTP hydrolase that promotes the GTP-dependent binding of aminoacyl-tRNA to the A-site of ribosomes during protein biosynthesis. This Deinonema sp protein is Elongation factor Tu.